The sequence spans 207 residues: Small ribosomal subunit protein uS4 (207 aa).

Positions 31-53 (KAKFDSKPGQHGRTSGARTSDYG) are disordered. The 61-residue stretch at 97 to 157 (CRLDNVVYRM…EKSKKQARIV (61 aa)) folds into the S4 RNA-binding domain.

Belongs to the universal ribosomal protein uS4 family. In terms of assembly, part of the 30S ribosomal subunit. Contacts protein S5. The interaction surface between S4 and S5 is involved in control of translational fidelity.

In terms of biological role, one of the primary rRNA binding proteins, it binds directly to 16S rRNA where it nucleates assembly of the body of the 30S subunit. Its function is as follows. With S5 and S12 plays an important role in translational accuracy. The polypeptide is Small ribosomal subunit protein uS4 (Acidovorax ebreus (strain TPSY) (Diaphorobacter sp. (strain TPSY))).